The sequence spans 433 residues: O-methyltransferase hasC (433 aa).

Residues glutamate 265 and 293–295 (GDF) contribute to the S-adenosyl-L-methionine site. Histidine 313 acts as the Proton acceptor in catalysis. The segment at 413–433 (SPRANGNGNSAGGLEWESELM) is disordered.

The protein belongs to the class I-like SAM-binding methyltransferase superfamily. Cation-independent O-methyltransferase family. COMT subfamily.

The protein operates within secondary metabolite biosynthesis. O-methyltransferase; part of the gene cluster that mediates the biosynthesis of hexadehydro-astechrome (HAS), a tryptophan-derived iron(III)-complex that acts as a virulence factor in infected mice. Within the pathway, hasC, with the cytochrome P450 monooxygenase hasH and the FAD-linked oxidoreductase hasG, convert the hasE-prenylated Trp-Ala-dipeptide into an O-methylated diketopiperazine that is then released from the hasD NRPS. The HAS biosynthesis begins with the synthesis of a tethered Trp-Ala dipeptide by the NRPS hasD. The 7-dimethylallyltryptophan synthase hasE then catalyzes the prenylation of the hasD-tethered tryptophan or the resulting tethered Trp-Ala dipeptide at the C-7 position of the indole moiety. HAS biosynthesis continues via tethered intermediates with the succesive actions of the cytochrome P450 monooxygenase hasH, the O-methyltransferase hasC, and the FAD-linked oxidoreductase hasG. The resulting O-methylated diketopiperazine is then released from hasD. Finally, three O-methylated diketopiperazine molecules assemble in a trimeric complex with Fe(III) to produce hexadehydro-astechrome. This is O-methyltransferase hasC from Aspergillus fumigatus (strain CBS 144.89 / FGSC A1163 / CEA10) (Neosartorya fumigata).